The chain runs to 327 residues: Interleukin-12 subunit beta (327 aa).

An N-terminal signal peptide occupies residues 1-22; the sequence is MHPQQLVVSWFSLVLLASPIVA. The Ig-like C2-type domain occupies 23-106; that stretch reads IWELEKNVYI…LSRSLLLLHK (84 aa). Cysteine 50 and cysteine 90 form a disulfide bridge. Asparagine 223 carries an N-linked (GlcNAc...) asparagine glycan. The Fibronectin type-III domain maps to 238 to 327; it reads PPKNLQLKPL…WSEWASVSCS (90 aa).

Belongs to the IL-12B family. Heterodimer with IL12A; disulfide-linked. The heterodimer is known as interleukin IL-12. Heterodimer with IL23A; disulfide-linked. The heterodimer is known as interleukin IL-23. Also secreted as a monomer. Interacts with NBR1; this interaction promotes IL-12 secretion.

In terms of biological role, cytokine that can act as a growth factor for activated T and NK cells, enhance the lytic activity of NK/lymphokine-activated killer cells, and stimulate the production of IFN-gamma by resting PBMC. Its function is as follows. Associates with IL23A to form the IL-23 interleukin, a heterodimeric cytokine which functions in innate and adaptive immunity. IL-23 may constitute with IL-17 an acute response to infection in peripheral tissues. IL-23 binds to a heterodimeric receptor complex composed of IL12RB1 and IL23R, activates the Jak-Stat signaling cascade, stimulates memory rather than naive T-cells and promotes production of pro-inflammatory cytokines. IL-23 induces autoimmune inflammation and thus may be responsible for autoimmune inflammatory diseases and may be important for tumorigenesis. This Bubalus bubalis (Domestic water buffalo) protein is Interleukin-12 subunit beta (IL12B).